We begin with the raw amino-acid sequence, 885 residues long: Initiator protein NS1 (885 aa).

A disordered region spans residues alanine 404 to proline 477. The segment covering serine 409–threonine 423 has biased composition (polar residues). Residues glutamine 452 to alanine 465 are compositionally biased toward gly residues.

Belongs to the parvoviruses initiator protein NS1 family. In terms of assembly, homooligomer. Mg(2+) is required as a cofactor.

It is found in the host nucleus. It carries out the reaction ATP + H2O = ADP + phosphate + H(+). Multifunctional protein which displays endonuclease and helicase activities required for initiating and directing viral DNA replication. Also plays a role in viral packaging and transactivation of several promoters. Binds site-specifically to 2-3 approximate tandem copies within the origins of replication (Ori), unwinds this hairpin region and nicks one DNA strand thereby initiating the rolling circle replication (RCR). In Bombyx mori densovirus (BmDNV), this protein is Initiator protein NS1.